We begin with the raw amino-acid sequence, 432 residues long: Lecithin-cholesterol acyltransferase-like 1 (432 aa).

The helical transmembrane segment at 7 to 29 threads the bilayer; it reads HYSVVIAILVVVTMTSMCQAVGS. Residue serine 209 is the Acyl-ester intermediate of the active site. Residues aspartate 374 and histidine 400 each act as charge relay system in the active site.

Belongs to the AB hydrolase superfamily. Lipase family.

The protein resides in the membrane. In Arabidopsis thaliana (Mouse-ear cress), this protein is Lecithin-cholesterol acyltransferase-like 1 (LCAT1).